Consider the following 368-residue polypeptide: Core histone macro-H2A.1 (368 aa).

In terms of domain architecture, Histone H2A spans 2–117 (SSRGGKKKST…NIHPELLAKK (116 aa)). 2 positions are modified to N6-lactoyllysine; alternate: K7 and K9. N6-methyllysine is present on K18. An N6-acetyllysine; alternate modification is found at K116. A Glycyl lysine isopeptide (Lys-Gly) (interchain with G-Cter in ubiquitin); alternate cross-link involves residue K116. K117 participates in a covalent cross-link: Glycyl lysine isopeptide (Lys-Gly) (interchain with G-Cter in ubiquitin). The residue at position 123 (K123) is an N6-acetyllysine; alternate. N6,N6-dimethyllysine; alternate is present on K123. K123 participates in a covalent cross-link: Glycyl lysine isopeptide (Lys-Gly) (interchain with G-Cter in SUMO2); alternate. Residues 128 to 179 (ITPPPAKKAKSPSQKKPVAKKTGGKKGARKSKKQGEVSKAASADSTTEGAPT) are disordered. At T129 the chain carries Phosphothreonine. Residues 144-159 (PVAKKTGGKKGARKSK) are compositionally biased toward basic residues. Residue K166 forms a Glycyl lysine isopeptide (Lys-Gly) (interchain with G-Cter in SUMO2) linkage. A phosphoserine mark is found at S169 and S172. The region spanning 183 to 366 (TVLSTKSLFL…IYVQEMAKLD (184 aa)) is the Macro domain. K188 participates in a covalent cross-link: Glycyl lysine isopeptide (Lys-Gly) (interchain with G-Cter in SUMO2). A glycoprotein contacts are provided by D202, I203, V225, S274, G311, S312, G313, and N315. A Glycyl lysine isopeptide (Lys-Gly) (interchain with G-Cter in SUMO2) cross-link involves residue K319.

This sequence belongs to the histone H2A family. The nucleosome is a histone octamer containing two molecules each of H2A, H2B, H3 and H4 assembled in one H3-H4 heterotetramer and two H2A-H2B heterodimers. Interacts with HDAC1 and HDAC2. Interacts with SPOP. Part of a complex consisting of MACROH2A1, CUL3 and SPOP. In terms of assembly, interacts with PARP1. In terms of processing, monoubiquitinated at either Lys-116 or Lys-117. May also be polyubiquitinated. Ubiquitination is mediated by the CUL3/SPOP E3 complex and does not promote proteasomal degradation. Instead, it is required for enrichment in inactive X chromosome chromatin. In terms of tissue distribution, present only in liver and brain (at protein level). Present in brain, thymus, testis, liver and kidney (at protein level).

It is found in the nucleus. It localises to the chromosome. Its function is as follows. Variant histone H2A which replaces conventional H2A in a subset of nucleosomes where it represses transcription. Nucleosomes wrap and compact DNA into chromatin, limiting DNA accessibility to the cellular machineries which require DNA as a template. Histones thereby play a central role in transcription regulation, DNA repair, DNA replication and chromosomal stability. DNA accessibility is regulated via a complex set of post-translational modifications of histones, also called histone code, and nucleosome remodeling. Involved in stable X chromosome inactivation. Inhibits the binding of transcription factors, including NF-kappa-B, and interferes with the activity of remodeling SWI/SNF complexes. Inhibits histone acetylation by EP300 and recruits class I HDACs, which induces a hypoacetylated state of chromatin. Isoform that specifically binds poly-ADP-ribose and O-acetyl-ADP-ribose and plays a key role in NAD(+) metabolism. Able to bind to the ends of poly-ADP-ribose chains created by PARP1 and cap them. This prevents PARP1 from further addition of ADP-ribose and thus limits the consumption of nuclear NAD(+), allowing the cell to maintain proper NAD(+) levels in both the nucleus and the mitochondria to promote proper mitochondrial respiration. Increases the expression of genes involved in redox metabolism, including SOD3. Functionally, in contrast to isoform 1, does not bind poly-ADP-ribose. Represses SOD3 gene expression. The protein is Core histone macro-H2A.1 of Rattus norvegicus (Rat).